Here is a 201-residue protein sequence, read N- to C-terminus: 3-isopropylmalate dehydratase small subunit (201 aa).

The protein belongs to the LeuD family. LeuD type 1 subfamily. As to quaternary structure, heterodimer of LeuC and LeuD.

The catalysed reaction is (2R,3S)-3-isopropylmalate = (2S)-2-isopropylmalate. It participates in amino-acid biosynthesis; L-leucine biosynthesis; L-leucine from 3-methyl-2-oxobutanoate: step 2/4. Its function is as follows. Catalyzes the isomerization between 2-isopropylmalate and 3-isopropylmalate, via the formation of 2-isopropylmaleate. The chain is 3-isopropylmalate dehydratase small subunit from Shigella dysenteriae serotype 1 (strain Sd197).